Reading from the N-terminus, the 96-residue chain is Small ribosomal subunit protein bS20 (96 aa).

It belongs to the bacterial ribosomal protein bS20 family.

Binds directly to 16S ribosomal RNA. This Anaplasma phagocytophilum (strain HZ) protein is Small ribosomal subunit protein bS20.